We begin with the raw amino-acid sequence, 617 residues long: Melatonin-related receptor (617 aa).

At 1-30 the chain is on the extracellular side; the sequence is MGPTLAVPTPYGCIGCKLPQPEYPPALIIF. The helical transmembrane segment at 31–51 threads the bilayer; that stretch reads MFCAMVITIVVDLIGNSMVIL. The Cytoplasmic portion of the chain corresponds to 52–64; it reads AVTKNKKLRNSGN. The helical transmembrane segment at 65-85 threads the bilayer; the sequence is IFVVSLSVADMLVAIYPYPLM. At 86 to 103 the chain is on the extracellular side; sequence LHAMSIGGWDLSQLQCQM. Residues Cys-101 and Cys-178 are joined by a disulfide bond. Residues 104-124 form a helical membrane-spanning segment; it reads VGFITGLSVVGSIFNIVAIAI. The Cytoplasmic segment spans residues 125–143; sequence NRYCYICHSLQYERIFSVR. Residues 144 to 164 traverse the membrane as a helical segment; sequence NTCIYLVITWIMTVLAVLPNM. At 165–188 the chain is on the extracellular side; the sequence is YIGTIEYDPRTYTCIFNYLNNPVF. The helical transmembrane segment at 189 to 209 threads the bilayer; it reads TVTIVCIHFVLPLLIVGFCYV. The Cytoplasmic segment spans residues 210 to 239; the sequence is RIWTKVLAARDPAGQNPDNQLAEVRNFLTM. Residues 240–260 form a helical membrane-spanning segment; sequence FVIFLLFAVCWCPINVLTVLV. At 261-273 the chain is on the extracellular side; it reads AVSPKEMAGKIPN. The helical transmembrane segment at 274-294 threads the bilayer; sequence WLYLAAYFIAYFNSCLNAVIY. Residues 295-617 lie on the Cytoplasmic side of the membrane; that stretch reads GLLNENFRRE…VEDDPDEMAV (323 aa). Disordered regions lie at residues 340–438 and 464–596; these read AHAR…ATVY and SVHF…VTTS. Residues 341–353 show a composition bias toward basic and acidic residues; the sequence is HARDQAREQDRAH. Residues 485–500 show a composition bias toward polar residues; sequence GSHSKSAFSAATSHPK.

The protein belongs to the G-protein coupled receptor 1 family. As to quaternary structure, homodimer, and heterodimer with MTNR1A and MTNR1B. Interacts with KAT5. Interacts with RTN4 isoform A/NOGO-A. Interacts with TGFBR1. Interacts with GTF2I. Cleaved by CAPN1 in a calcium-dependent manner. As to expression, hypothalamus and pituitary.

Its subcellular location is the cell membrane. It is found in the postsynaptic density. The protein resides in the nucleus. G protein-coupled receptor that plays a role in numerous physiological processes including regulation of energy metabolism, neurite outgrowth or cell migration. Promotes self-renewal and neuronal differentiation of neural progenitor cells through activation of the NOTCH and WNT/beta-catenin signaling pathways. Modulates the KAT5-dependent glucocorticoid receptor signaling by modulating KAT5 subcellular compartmentalisation. Also plays a role in the activation TGFBR1 in the absence of TGFBR2 by interfering with FKBP1A binding to TGFBR1, leading to induction of both canonical and non-canonical SMAD signaling pathways resulting in inhibition of proliferation or promotion of migration. Its function is as follows. Upon cleavage by CAPN1, functions as a scaffold in the nucleus for interacting partners such as GTF2I to promote FOS promoter activation. The chain is Melatonin-related receptor (GPR50) from Homo sapiens (Human).